Here is a 357-residue protein sequence, read N- to C-terminus: Mating-type protein MAT-1 (357 aa).

A DNA-binding region (alpha box) is located at residues 53 to 108 (RAKRPLNAFMAFRTYYLKLFPDTQQKNASGFLTQLWGGDPHRNKWALIAKVYSFLR).

Belongs to the MATALPHA1 family.

It is found in the nucleus. Mating type proteins are sequence specific DNA-binding proteins that act as master switches in fungal differentiation by controlling gene expression in a cell type-specific fashion. Transcriptional activator that induces the transcription of alpha-specific genes. The polypeptide is Mating-type protein MAT-1 (MAT1) (Fusarium oxysporum (Fusarium vascular wilt)).